Reading from the N-terminus, the 464-residue chain is Phosphoglucosamine mutase (464 aa).

The active-site Phosphoserine intermediate is the S112. Mg(2+)-binding residues include S112, D252, D254, and D256. S112 is subject to Phosphoserine.

Belongs to the phosphohexose mutase family. Mg(2+) serves as cofactor. In terms of processing, activated by phosphorylation.

The enzyme catalyses alpha-D-glucosamine 1-phosphate = D-glucosamine 6-phosphate. Catalyzes the conversion of glucosamine-6-phosphate to glucosamine-1-phosphate. This chain is Phosphoglucosamine mutase, found in Synechococcus sp. (strain CC9605).